The primary structure comprises 488 residues: Ribosomal RNA small subunit methyltransferase F (488 aa).

Residues Ala135–Lys141, Glu159, Asp186, and Asp204 each bind S-adenosyl-L-methionine. The Nucleophile role is filled by Cys257.

The protein belongs to the class I-like SAM-binding methyltransferase superfamily. RsmB/NOP family.

Its subcellular location is the cytoplasm. It carries out the reaction cytidine(1407) in 16S rRNA + S-adenosyl-L-methionine = 5-methylcytidine(1407) in 16S rRNA + S-adenosyl-L-homocysteine + H(+). Its function is as follows. Specifically methylates the cytosine at position 1407 (m5C1407) of 16S rRNA. In Shewanella pealeana (strain ATCC 700345 / ANG-SQ1), this protein is Ribosomal RNA small subunit methyltransferase F.